Reading from the N-terminus, the 457-residue chain is Cytochrome b-c1 complex subunit 1, mitochondrial (457 aa).

A mitochondrion-targeting transit peptide spans 1 to 26 (MLRTVTSKTVSNQFKRSLATAVATPK).

The protein belongs to the peptidase M16 family. UQCRC1/QCR1 subfamily. As to quaternary structure, component of the ubiquinol-cytochrome c oxidoreductase (cytochrome b-c1 complex, complex III, CIII), a multisubunit enzyme composed of 10 subunits. The complex is composed of 3 respiratory subunits cytochrome b (COB), cytochrome c1 (CYT1) and Rieske protein (RIP1), 2 core protein subunits COR1 and QCR2, and 5 low-molecular weight protein subunits QCR6, QCR7, QCR8, QCR9 and QCR10. The complex exists as an obligatory dimer and forms supercomplexes (SCs) in the inner mitochondrial membrane with a monomer or a dimer of cytochrome c oxidase (complex IV, CIV), resulting in 2 different assemblies (supercomplexes III(2)IV and III(2)IV(2)). COR1 interacts with COX5A at the CIII-CIV interface.

Its subcellular location is the mitochondrion inner membrane. In terms of biological role, component of the ubiquinol-cytochrome c oxidoreductase, a multisubunit transmembrane complex that is part of the mitochondrial electron transport chain which drives oxidative phosphorylation. The respiratory chain contains 3 multisubunit complexes succinate dehydrogenase (complex II, CII), ubiquinol-cytochrome c oxidoreductase (cytochrome b-c1 complex, complex III, CIII) and cytochrome c oxidase (complex IV, CIV), that cooperate to transfer electrons derived from NADH and succinate to molecular oxygen, creating an electrochemical gradient over the inner membrane that drives transmembrane transport and the ATP synthase. The cytochrome b-c1 complex catalyzes electron transfer from ubiquinol to cytochrome c, linking this redox reaction to translocation of protons across the mitochondrial inner membrane, with protons being carried across the membrane as hydrogens on the quinol. In the process called Q cycle, 2 protons are consumed from the matrix, 4 protons are released into the intermembrane space and 2 electrons are passed to cytochrome c. This Saccharomyces cerevisiae (strain ATCC 204508 / S288c) (Baker's yeast) protein is Cytochrome b-c1 complex subunit 1, mitochondrial (COR1).